A 91-amino-acid chain; its full sequence is Salivary lectin pathway inhibitor (91 aa).

Positions 1 to 21 (MGLTETTLVLVSLAFFASAVA) are cleaved as a signal peptide. N-linked (GlcNAc...) asparagine glycans are attached at residues Asn26 and Asn87.

This sequence belongs to the salp14 family. In terms of processing, glycosylated; deglycosylation largely abrogates the complement inhibitory effect. As to expression, nymph salivary gland (at protein level). Saliva (at protein level). Not detected in midgut.

It localises to the secreted. Inhibits the lectin pathway of complement system activation in the host by reducing binding of mannose-binding lectin and L-ficolin to their ligands. Does not affect the classical and alternative pathways of complement system activation in the host. Functionally, (Microbial infection) Protects Borrelia garinii (strain A87S) from host complement-mediated killing by preventing deposition of host C5b-9 membrane attack complexes on the surface of spirochetes. Inhibits phagocytosis of B.garinii (strain A87S) by human neutrophils. Impairs Borrelia-induced complement-mediated chemotaxis of human polymorphonuclear leukocytes. Its function is as follows. (Microbial infection) Protects Borrelia burgdorferi (strain N40), which is resistant to normal human serum, from Borrelia-opsonizing antibody-mediated complement-dependent killing. In Ixodes scapularis (Black-legged tick), this protein is Salivary lectin pathway inhibitor.